The chain runs to 298 residues: Apolipoprotein E (298 aa).

Positions 1–18 (MKVLWAALVVTLLAGCRA) are cleaved as a signal peptide. Repeat copies occupy residues 74–95 (LLIEDTMKEVKAYKAELEKELG), 96–117 (PVAEDTKARLAKELQAAQARLG), 118–139 (ADMEEVRNRLSQYRSEVQAMLG), 140–161 (QSSEELRARLTSHPRKMKRRLQ), 162–183 (RDIDELQKRMAVYKAGAQEGAE), 184–204 (RGVSAIRERLGSLIEQGRLQA), 205–222 (LASQPLQERAQAWGEQMR), and 223–244 (GRLEKVGSQARDRLEEVREQME). The segment at 74-244 (LLIEDTMKEV…RLEEVREQME (171 aa)) is 8 X 22 AA approximate tandem repeats. Methionine sulfoxide is present on Met-137. Ser-141 is subject to Phosphoserine. Positions 152 to 162 (HPRKMKRRLQR) are LDL and other lipoprotein receptors binding. Position 156-159 (156-159 (MKRR)) interacts with heparin. 218–225 (GEQMRGRL) is a heparin binding site. Positions 260-272 (RLKSWFEPMMEDM) are specificity for association with VLDL.

The protein belongs to the apolipoprotein A1/A4/E family. As to quaternary structure, homotetramer. May interact with ABCA1; functionally associated with ABCA1 in the biogenesis of HDLs. May interact with APP/A4 amyloid-beta peptide; the interaction is extremely stable in vitro but its physiological significance is unclear. May interact with MAPT. May interact with MAP2. In the cerebrospinal fluid, interacts with secreted SORL1. Interacts with PMEL; this allows the loading of PMEL luminal fragment on ILVs to induce fibril nucleation. Post-translationally, APOE exists as multiple glycosylated and sialylated glycoforms within cells and in plasma. The extent of glycosylation and sialylation are tissue and context specific. Glycated in plasma VLDL. In terms of processing, phosphorylated by FAM20C in the extracellular medium.

The protein resides in the secreted. Its subcellular location is the extracellular space. It localises to the extracellular matrix. The protein localises to the extracellular vesicle. It is found in the endosome. The protein resides in the multivesicular body. Functionally, APOE is an apolipoprotein, a protein associating with lipid particles, that mainly functions in lipoprotein-mediated lipid transport between organs via the plasma and interstitial fluids. APOE is a core component of plasma lipoproteins and is involved in their production, conversion and clearance. Apolipoproteins are amphipathic molecules that interact both with lipids of the lipoprotein particle core and the aqueous environment of the plasma. As such, APOE associates with chylomicrons, chylomicron remnants, very low density lipoproteins (VLDL) and intermediate density lipoproteins (IDL) but shows a preferential binding to high-density lipoproteins (HDL). It also binds a wide range of cellular receptors including the LDL receptor/LDLR and the very low-density lipoprotein receptor/VLDLR that mediate the cellular uptake of the APOE-containing lipoprotein particles. Finally, APOE also has a heparin-binding activity and binds heparan-sulfate proteoglycans on the surface of cells, a property that supports the capture and the receptor-mediated uptake of APOE-containing lipoproteins by cells. In Cavia porcellus (Guinea pig), this protein is Apolipoprotein E (APOE).